Consider the following 116-residue polypeptide: Large ribosomal subunit protein bL21c (116 aa).

Belongs to the bacterial ribosomal protein bL21 family. Part of the 50S ribosomal subunit.

It is found in the plastid. The protein localises to the chloroplast. Its function is as follows. This protein binds to 23S rRNA. This Marchantia polymorpha (Common liverwort) protein is Large ribosomal subunit protein bL21c.